We begin with the raw amino-acid sequence, 105 residues long: MMLKPSIDTLLDKVPSKYSLVILQAKRAHELEAGAKATQSFKSVKSTLRALEEIESGNVVIHPDPSAKRAAVRAKIEADRLAKEEEERKIKEQIAKEKEEEGEKI.

The protein belongs to the RNA polymerase subunit omega family. As to quaternary structure, the RNAP catalytic core consists of 2 alpha, 1 beta, 1 beta' and 1 omega subunit. When a sigma factor is associated with the core the holoenzyme is formed, which can initiate transcription.

It carries out the reaction RNA(n) + a ribonucleoside 5'-triphosphate = RNA(n+1) + diphosphate. Promotes RNA polymerase assembly. Latches the N- and C-terminal regions of the beta' subunit thereby facilitating its interaction with the beta and alpha subunits. The chain is DNA-directed RNA polymerase subunit omega from Streptococcus uberis (strain ATCC BAA-854 / 0140J).